The sequence spans 846 residues: Major vault protein beta (846 aa).

Position 2 is an N-acetylalanine (Ala-2). 9 MVP repeats span residues 2–60, 61–115, 116–172, 173–225, 226–280, 281–332, 333–388, 389–458, and 459–521; these read ATPV…IPPR, QYCI…QPVP, LQVI…EPVR, AVII…GFIQ, ALVL…RDIK, AITL…IQNV, NVLS…RRKR, IPLD…STKV, and ITYR…FLGP.

In terms of assembly, the vault ribonucleoprotein particle is a huge (400 A x 670 A) cage structure of 12.9 MDa. It consists of a dimer of half-vaults, with each half-vault comprising 39 identical major vault protein (MVP) chains. Dictyostelium is one of the few organisms in which the major component is actually two proteins (alpha and beta).

Its subcellular location is the cytoplasm. The protein localises to the nucleus. Functionally, unknown, though MVP-beta is required for normal vault structure. The protein is Major vault protein beta (mvpB) of Dictyostelium discoideum (Social amoeba).